The chain runs to 44 residues: uncharacterized protein (44 aa).

This is an uncharacterized protein from Caenorhabditis elegans.